The sequence spans 1574 residues: Myosin-2 (1574 aa).

Serine 2 carries the post-translational modification N-acetylserine. The region spanning 4-57 is the Myosin N-terminal SH3-like domain; the sequence is EVGTRCWYPHKELGWIGAEVIKNEFNDGKYHLELQLEDDEIVSVDTKDLNNDKD. Residues 70–781 form the Myosin motor domain; it reads EATEDLTSLS…MLAYLEKLRS (712 aa). Residue 164–171 coordinates ATP; sequence GESGAGKT. Residues 443–523 form an actin-binding region; it reads FIGVLDIYGF…LGILSLLDEE (81 aa). IQ domains lie at 784–806, 807–831, 832–855, 856–879, 880–902, and 903–932; these read MHNSIVMIQKKIRAKYYRKQYLQ, ISQAIKYLQNNIKGFIIRQRVNDEM, KVNCATLLQAAYRGHSIRANVFSV, LRTITNLQKKIRKELKQRQLKQEH, EYNAAVTIQSKVRTFEPRSRFLR, and TKKDTVVVQSLIRRRAAQRKLKQLKADAKS. The stretch at 933–1088 forms a coiled coil; it reads VNHLKEVSYK…RLQTAMSLGT (156 aa). The segment at 1087–1574 is non alpha-helical, tail domain; it reads GTVTTSVLPQ…VAQQVVQDGH (488 aa). Threonine 1097 is subject to Phosphothreonine. Residue serine 1121 is modified to Phosphoserine. The Dilute domain occupies 1226 to 1501; sequence AQVLTTIQKV…LRYVADIVKK (276 aa).

The protein belongs to the TRAFAC class myosin-kinesin ATPase superfamily. Myosin family. Homodimer. Interacts with calmodulin (CMD1) and the myosin light chain MLC1 through its IQ repeats. Binds to the membrane receptors SEC4 and VAC17 to transport secretory vesicles and the vacuole, respectively. Binds to KAR9, which transports BIM1-coated cytoplasmic microtubules that are attached to the spindle pole body into the emerging bud, thereby correctly orienting the mitotic spindle. Interacts with YPT11 and MMR1 to accelerate mitochondrial distribution to the bud. Interacts with SHE4 and localizes it to the bud tip. Interacts with RHO3 and SMY1, putative regulators of MYO2 function. Interacts with SRO7.

Its subcellular location is the bud neck. It is found in the bud tip. Myosin heavy chain that is required for the cell cycle-regulated transport of various organelles and proteins for their segregation. Functions by binding with its tail domain to receptor proteins on organelles and exerting force with its N-terminal motor domain against actin filaments, thereby transporting its cargo along polarized actin cables. Essential for the delivery of secretory vesicles to sites of active growth during bud emergence and cytokinesis. Required for segregation and inheritance of peroxisomes, late Golgi compartments, mitochondria and the vacuole to the daughter cell during cell division. Also required for correct alignment of the spindle during mitosis. This chain is Myosin-2 (MYO2), found in Saccharomyces cerevisiae (strain ATCC 204508 / S288c) (Baker's yeast).